The sequence spans 77 residues: uncharacterized protein (77 aa).

A Peptidase A1 domain is found at 1 to 77 (MAFERQGKIE…VAILDGKLVW (77 aa)).

This is an uncharacterized protein from Saccharomyces cerevisiae (strain ATCC 204508 / S288c) (Baker's yeast).